We begin with the raw amino-acid sequence, 200 residues long: Protein RISC-INTERACTING CLEARING 3'-5' EXORIBONUCLEASE 1 (200 aa).

3 oligomerization regions span residues 35-66, 102-127, and 166-173; these read SKIL…KSEW, KFVT…IVIR, and DSIQSKWD.

Belongs to the RICE family. Homohexamer with DnaQ-like exonuclease fold in a ring-shaped structure with a central cavity. Component of AGO1 and AGO10-centered RNA-induced silencing complexes (RISC). Interacts with and acts as a cofactor of AGO1 and AGO10. As to expression, ubiquitously expressed throughout development in germinating seeds, cotyledons, leaves and roots of young seedlings and adult plants, stems and inflorescence.

The protein resides in the cytoplasm. The catalysed reaction is Exonucleolytic cleavage in the 3'- to 5'-direction to yield nucleoside 5'-phosphates.. Its function is as follows. 3'-to-5' exoribonuclease (RNase) specifically targeting single-stranded RNAs. Triggers miRNA accumulation in RNA-induced silencing complex (RISC), composed of miRNAs and AGO proteins, by degrading uridylated cleavage fragments. Required during plant growth and development. The protein is Protein RISC-INTERACTING CLEARING 3'-5' EXORIBONUCLEASE 1 of Arabidopsis thaliana (Mouse-ear cress).